The following is a 336-amino-acid chain: Alcohol dehydrogenase, propanol-preferring (336 aa).

Cys-37, His-58, Cys-89, Cys-92, Cys-95, Cys-103, and Cys-145 together coordinate Zn(2+).

It belongs to the zinc-containing alcohol dehydrogenase family. Zn(2+) serves as cofactor.

It catalyses the reaction a primary alcohol + NAD(+) = an aldehyde + NADH + H(+). It carries out the reaction a secondary alcohol + NAD(+) = a ketone + NADH + H(+). Preferred specificity is towards 1-propanol. This chain is Alcohol dehydrogenase, propanol-preferring (adhP), found in Escherichia coli (strain K12).